A 201-amino-acid chain; its full sequence is Small ribosomal subunit protein uS4 (201 aa).

The 65-residue stretch at arginine 103–threonine 167 folds into the S4 RNA-binding domain. Positions valine 163 to serine 201 are disordered. Over residues proline 172–valine 185 the composition is skewed to acidic residues. The segment covering alanine 189–serine 201 has biased composition (basic and acidic residues).

The protein belongs to the universal ribosomal protein uS4 family. In terms of assembly, part of the 30S ribosomal subunit. Contacts protein S5. The interaction surface between S4 and S5 is involved in control of translational fidelity.

One of the primary rRNA binding proteins, it binds directly to 16S rRNA where it nucleates assembly of the body of the 30S subunit. Functionally, with S5 and S12 plays an important role in translational accuracy. This chain is Small ribosomal subunit protein uS4, found in Nitrosopumilus maritimus (strain SCM1).